Reading from the N-terminus, the 228-residue chain is Probable septum site-determining protein MinC (228 aa).

The protein belongs to the MinC family. In terms of assembly, interacts with MinD and FtsZ.

In terms of biological role, cell division inhibitor that blocks the formation of polar Z ring septums. Rapidly oscillates between the poles of the cell to destabilize FtsZ filaments that have formed before they mature into polar Z rings. Prevents FtsZ polymerization. In Symbiobacterium thermophilum (strain DSM 24528 / JCM 14929 / IAM 14863 / T), this protein is Probable septum site-determining protein MinC.